Reading from the N-terminus, the 699-residue chain is MPDLLLELFSEEIPARMQAKAADDLRRMVTDKLVAEGLVYEGAKAFATPRRLALTVHGIPARQPDLKTERRGPKMGAPDAAVQGFLKATGLKSLDEAKIQRDPKGDFYIALIEKPGRDAIDVLAEILPVIIRTFPWPKSMRWGARSGKPGSLNWVRPLHAITATFGLETEEPDVVKFAVDGIEAGQTTYGHRFLAPAAINVRRFEDYEAKLLDAKVVLDPERRKDAILTDAKQLAFAQGFDLVEDQNLLDEVAGLVEWPVVLMGSFEEEFLATPAEVIRATIRNNQKCFVVSDAKTGKLANKFILVANIEATDGGKTIIAGNERVIRARLSDAKFFYETDLKTKLEDRLPKFEQIVFHEELGTQAARITRIERLAAEIAPLVGADVAKTARAAHLAKADLLTEVVGEFPEVQGLMGKYYALAQGEDASVAAACEEHYKPQGPADRVPTDPVSVAVALADKLDTLVGFWAIDEKPTGSKDPYALRRAALGVIRLIAENTLRLSLMKVAASALAGLSVKPADVQKLPGDLLTFFADRLKVQLREQGARHDLVDAVFALGGQDDLLMIVRRVDALGKFLESDDGKNLLAGTKRASNILSIEEKKDKRTFDGAPDAALYSLGEEKALAKAISEVQAEASASVAKEDFAAAMSAMAKLRPPVDAFFDKVRVNDDDPKVRENRLKLLNEIRSATRAVADFSKIQD.

This sequence belongs to the class-II aminoacyl-tRNA synthetase family. In terms of assembly, tetramer of two alpha and two beta subunits.

It localises to the cytoplasm. It catalyses the reaction tRNA(Gly) + glycine + ATP = glycyl-tRNA(Gly) + AMP + diphosphate. This is Glycine--tRNA ligase beta subunit from Bradyrhizobium diazoefficiens (strain JCM 10833 / BCRC 13528 / IAM 13628 / NBRC 14792 / USDA 110).